Reading from the N-terminus, the 331-residue chain is 4-hydroxythreonine-4-phosphate dehydrogenase (331 aa).

His-136 and Thr-137 together coordinate substrate. A divalent metal cation contacts are provided by His-166, His-211, and His-266. The substrate site is built by Lys-274, Asn-283, and Arg-292.

The protein belongs to the PdxA family. Homodimer. Zn(2+) is required as a cofactor. Requires Mg(2+) as cofactor. It depends on Co(2+) as a cofactor.

It is found in the cytoplasm. The enzyme catalyses 4-(phosphooxy)-L-threonine + NAD(+) = 3-amino-2-oxopropyl phosphate + CO2 + NADH. Its pathway is cofactor biosynthesis; pyridoxine 5'-phosphate biosynthesis; pyridoxine 5'-phosphate from D-erythrose 4-phosphate: step 4/5. In terms of biological role, catalyzes the NAD(P)-dependent oxidation of 4-(phosphooxy)-L-threonine (HTP) into 2-amino-3-oxo-4-(phosphooxy)butyric acid which spontaneously decarboxylates to form 3-amino-2-oxopropyl phosphate (AHAP). In Thioalkalivibrio sulfidiphilus (strain HL-EbGR7), this protein is 4-hydroxythreonine-4-phosphate dehydrogenase.